The chain runs to 430 residues: UDP-N-acetylmuramoylalanine--D-glutamate ligase (430 aa).

Residue 109–115 (GTDGKST) participates in ATP binding.

It belongs to the MurCDEF family.

It is found in the cytoplasm. The catalysed reaction is UDP-N-acetyl-alpha-D-muramoyl-L-alanine + D-glutamate + ATP = UDP-N-acetyl-alpha-D-muramoyl-L-alanyl-D-glutamate + ADP + phosphate + H(+). It participates in cell wall biogenesis; peptidoglycan biosynthesis. In terms of biological role, cell wall formation. Catalyzes the addition of glutamate to the nucleotide precursor UDP-N-acetylmuramoyl-L-alanine (UMA). This Thermotoga petrophila (strain ATCC BAA-488 / DSM 13995 / JCM 10881 / RKU-1) protein is UDP-N-acetylmuramoylalanine--D-glutamate ligase.